The following is a 275-amino-acid chain: Dermonecrotic toxin LamSicTox-alphaIV1i (275 aa).

Histidine 5 is a catalytic residue. Residues glutamate 25 and aspartate 27 each coordinate Mg(2+). Histidine 41 acts as the Nucleophile in catalysis. Cystine bridges form between cysteine 45/cysteine 51 and cysteine 47/cysteine 192. Aspartate 85 provides a ligand contact to Mg(2+).

This sequence belongs to the arthropod phospholipase D family. Class II subfamily. Mg(2+) is required as a cofactor. As to expression, expressed by the venom gland.

It is found in the secreted. It carries out the reaction an N-(acyl)-sphingosylphosphocholine = an N-(acyl)-sphingosyl-1,3-cyclic phosphate + choline. The catalysed reaction is an N-(acyl)-sphingosylphosphoethanolamine = an N-(acyl)-sphingosyl-1,3-cyclic phosphate + ethanolamine. The enzyme catalyses a 1-acyl-sn-glycero-3-phosphocholine = a 1-acyl-sn-glycero-2,3-cyclic phosphate + choline. It catalyses the reaction a 1-acyl-sn-glycero-3-phosphoethanolamine = a 1-acyl-sn-glycero-2,3-cyclic phosphate + ethanolamine. Its function is as follows. Dermonecrotic toxins cleave the phosphodiester linkage between the phosphate and headgroup of certain phospholipids (sphingolipid and lysolipid substrates), forming an alcohol (often choline) and a cyclic phosphate. This toxin acts on sphingomyelin (SM). It may also act on ceramide phosphoethanolamine (CPE), lysophosphatidylcholine (LPC) and lysophosphatidylethanolamine (LPE), but not on lysophosphatidylserine (LPS), and lysophosphatidylglycerol (LPG). It acts by transphosphatidylation, releasing exclusively cyclic phosphate products as second products. Induces dermonecrosis, hemolysis, increased vascular permeability, edema, inflammatory response, and platelet aggregation. The polypeptide is Dermonecrotic toxin LamSicTox-alphaIV1i (Loxosceles amazonica (Recluse spider)).